We begin with the raw amino-acid sequence, 586 residues long: Regulatory protein NPR3 (586 aa).

At Ser10 the chain carries Phosphoserine. Positions 60–135 (SDAEIIVDGV…IYTGRLKPFP (76 aa)) constitute a BTB domain. The C2HC NPR-type zinc-finger motif lies at 138 to 152 (VSTCVDPVCSHDCCR). Residues Cys141, Cys146, His148, and Cys151 each contribute to the Zn(2+) site. ANK repeat units follow at residues 261–291 (ERIGKILKALDSDDVELVKLLLTESDITLDQ), 293–320 (NGLHYSVVYSDPKVVAEILALDMGDVNY), and 324–353 (RGYTVLHFAAMRREPSIIISLIDKGANASE). Positions 383-523 (ESSKARLCID…MAEYIDDDIL (141 aa)) are salicylic acid-binding core (SBC). Arg428 serves as a coordination point for salicylate. Residues 554–586 (YSKDKESKIARSCLSASSSPSSSSIRDDLHNTT) are disordered. Over residues 565-577 (SCLSASSSPSSSS) the composition is skewed to low complexity.

It belongs to the plant 'ANKYRIN-BTB/POZ' family. 'NPR1-like' subfamily. In terms of assembly, forms homodimers and heterodimers with NPR4 in the presence of salicylic acid (SA). Interacts with TGA2, TGA3, TGA5 and TGA6. Interacts with CUL3A, a core component of the cullin-RING ubiquitin ligases (CRL). Interacts with TGA2 in vivo in the nucleus. Binds to NPR1; this interaction is promoted by association with SA, probably due to conformational changes.

It is found in the nucleus. The protein operates within protein modification; protein ubiquitination. In terms of biological role, salicylic acid (SA)-binding substrate-specific adapter of an E3 ubiquitin-protein ligase complex (CUL3-RBX1-BTB) which mediates the ubiquitination and subsequent proteasomal degradation of NPR1 in response to SA. Together with NPR4, acts as receptor of salicylic acid to monitor immunity in a NPR1-dependent manner and induce systemic acquired resistance (SAR). Involved in the regulation of basal defense responses against pathogens, and may be implicated in the cross-talk between the SA- and JA-dependent signaling pathways. The protein is Regulatory protein NPR3 of Arabidopsis thaliana (Mouse-ear cress).